A 759-amino-acid chain; its full sequence is Forkhead box protein M1 (759 aa).

Disordered regions lie at residues 1–54 (MRTS…AESS) and 94–165 (KGKE…QRQE). Positions 36–54 (PGQQEPTQAQASQDVAESS) are enriched in polar residues. Residues 141 to 151 (LGPKPGAKGVP) are compositionally biased toward low complexity. Residues Lys200 and Lys324 each participate in a glycyl lysine isopeptide (Lys-Gly) (interchain with G-Cter in SUMO2) cross-link. The segment at residues 234–326 (ERPPYSYMAM…LTLDQVFKPL (93 aa)) is a DNA-binding region (fork-head). The disordered stretch occupies residues 328-349 (PGSPQSPEHLESQQKRPNPELR). Ser330 is subject to Phosphoserine. Residues 335–349 (EHLESQQKRPNPELR) show a composition bias toward basic and acidic residues. A Glycyl lysine isopeptide (Lys-Gly) (interchain with G-Cter in SUMO2) cross-link involves residue Lys355. Residue Ser375 is modified to Phosphoserine; by CHEK2. Glycyl lysine isopeptide (Lys-Gly) (interchain with G-Cter in SUMO2) cross-links involve residues Lys421 and Lys439. Ser521 is modified (phosphoserine). Disordered regions lie at residues 530-556 (LVTKRREKREVSRSRRKQHLQPPCLDE), 572-643 (MEIL…PQGA), and 681-706 (LASDPFSSSPPPHLEAKPGSPELQVP). Residues 531 to 542 (VTKRREKREVSR) show a composition bias toward basic and acidic residues. Polar residues predominate over residues 604-613 (PVSSTPSKSV). Position 608 is a phosphothreonine; by CDK1 (Thr608). Position 624 is a phosphothreonine (Thr624). Phosphoserine; by PLK1 is present on residues Ser726 and Ser735.

Post-translationally, phosphorylated in M (mitotic) phase. Phosphorylation by the checkpoint kinase CHEK2 in response to DNA damage increases the FOXM1 protein stability probably stimulating the transcription of genes involved in DNA repair. Phosphorylated by CDK1 in late S and G2 phases, creating docking sites for the POLO box domains of PLK1. Subsequently, PLK1 binds and phosphorylates FOXM1, leading to activation of transcriptional activity and subsequent enhanced expression of key mitotic regulators. Phosphorylated by GSK3B leading to ubiquitination and proteasomal degradation. In terms of tissue distribution, highly expressed in thymus and testis, but weakly in intestine and lung. Appears to be expressed only in adult organs containing proliferating/cycling cells or in response to growth factors.

It is found in the nucleus. Transcription factor regulating the expression of cell cycle genes essential for DNA replication and mitosis. Plays a role in the control of cell proliferation. Also plays a role in DNA break repair, participating in the DNA damage checkpoint response. Promotes transcription of PHB2. The chain is Forkhead box protein M1 (Foxm1) from Rattus norvegicus (Rat).